Here is a 566-residue protein sequence, read N- to C-terminus: MRRQWGSAMRAAEQAGCMVSASRAGQPEAGPWSCSGVILSRSPGLVLCHGGIFVPFLRAGSEVLTAAGAVFLPGDSCRDDLRLHVQWAPTAAGPGGGAERGRPGLCTPQCASLEPGPPAPSRGRPLQPRLPAELLLLLSCPAFWAHFARLFGDEAAEQWRFSSAARDDEVSEDEEADQLRALGWFALLGVRLGQEEVEEERGPAMAVSPLGAVPKGAPLLVCGSPFGAFCPDIFLNTLSCGVLSNVAGPLLLTDARCLPGTEGGGVFTARPAGALVALVVAPLCWKAGEWVGFTLLCAAAPLFRAARDALHRLPHSTAALAALLPPEVGVPWGLPLRDSGPLWAAAAVLVECGTVWGSGVAVAPRLVVTCRHVSPREAARVLVRSTTPKSVAIWGRVVFATQETCPYDIAVVSLEEDLDDVPIPVPAEHFHEGEAVSVVGFGVFGQSCGPSVTSGILSAVVQVNGTPVMLQTTCAVHSGSSGGPLFSNHSGNLLGIITSNTRDNNTGATYPHLNFSIPITVLQPALQQYSQTQDLGGLRELDRAAEPVRVVWRLQRPLAEAPRSKL.

The tract at residues 319-531 is serine protease; the sequence is ALAALLPPEV…LQPALQQYSQ (213 aa). Active-site charge relay system residues include His-372, Asp-408, and Ser-481.

This sequence belongs to the peptidase S1B family. In terms of assembly, homodimer. Forms a heterodimer with the C-terminal cleavage product (45 kDa form). Forms a heterodimer with the N-terminal cleavage product (15 kDa form). Interacts with PEX5. Interacts with LONP2. Self-cleavage gives rise to an N-terminal 15-kDa fragment and C-terminal 45-kDa fragment upon import into the peroxisomes. The full-lengh TYSND1 is the active the proteolytic processing of PTS1- and PTS2-proteins and in self-cleavage, and intermolecular self-cleavage of TYSND1 down-regulates its protease activity.

The protein resides in the peroxisome. In terms of biological role, peroxisomal protease that mediates both the removal of the leader peptide from proteins containing a PTS2 target sequence and processes several PTS1-containing proteins. Catalyzes the processing of PTS1-proteins involved in the peroxisomal beta-oxidation of fatty acids. The chain is Peroxisomal leader peptide-processing protease (TYSND1) from Homo sapiens (Human).